Here is a 691-residue protein sequence, read N- to C-terminus: Choline transporter-like 1 (691 aa).

The segment covering 1 to 10 (MGCAESKDGE) has biased composition (basic and acidic residues). The disordered stretch occupies residues 1-20 (MGCAESKDGEGEAQNNRPKY). Transmembrane regions (helical) follow at residues 28–48 (WLAI…FSFV), 205–225 (WHII…LVTM), and 232–252 (IVSW…TVAL). Asparagine 261 carries an N-linked (GlcNAc...) asparagine glycan. Transmembrane regions (helical) follow at residues 282–302 (VLTL…VIYF) and 332–352 (LLAF…IICL). Asparagine 385 carries an N-linked (GlcNAc...) asparagine glycan. A run of 4 helical transmembrane segments spans residues 408-428 (SMFW…FACQ), 527-547 (VVAI…NAMA), 562-582 (FILF…GIVL), and 591-611 (FYMA…HIIL).

This sequence belongs to the CTL (choline transporter-like) family.

Its subcellular location is the membrane. This is Choline transporter-like 1 from Drosophila melanogaster (Fruit fly).